Consider the following 106-residue polypeptide: Large ribosomal subunit protein bL21 (106 aa).

This sequence belongs to the bacterial ribosomal protein bL21 family. In terms of assembly, part of the 50S ribosomal subunit. Contacts protein L20.

Functionally, this protein binds to 23S rRNA in the presence of protein L20. In Xylella fastidiosa (strain 9a5c), this protein is Large ribosomal subunit protein bL21.